The chain runs to 250 residues: Non-specific acid phosphatase (250 aa).

An N-terminal signal peptide occupies residues 1 to 20 (MKSRYLLFFLPLIVAKYTSA).

This sequence belongs to the class A bacterial acid phosphatase family. Homodimer.

The protein resides in the periplasm. It carries out the reaction a phosphate monoester + H2O = an alcohol + phosphate. In Salmonella typhi, this protein is Non-specific acid phosphatase (phoN).